The chain runs to 223 residues: MKITFLGHAVFLIETNKKILIDPFITGNPAFPKDFSFDKIDYILVTHGHGDHIGDTVELSKKYNATVVSNFEICNYLQKKGVNKVHPMHIGGSFNFDFGKLKMTPALHGSGIIEGDNIIYGGNPGGFVIYSEKSVYHAGDTGLTKDMELLRGVDVAILPIGGNFVMDVEDALKAVEMIKPKVVIPMHYNTWDIISADEEKFKKGSKQLGVKCIILKPGESVEI.

It belongs to the UPF0173 family.

This chain is UPF0173 metal-dependent hydrolase THA_544, found in Thermosipho africanus (strain TCF52B).